Reading from the N-terminus, the 295-residue chain is Trimeric intracellular cation channel type 1B.1 (295 aa).

Over 1 to 27 (MVVPESFQLDQEILLDAGAQLHRLKMY) the chain is Lumenal. The helical transmembrane segment at 28 to 45 (PYFDVAHYLLMIIEVRDD) threads the bilayer. Residues 46-56 (LGSAASIFSRK) are Cytoplasmic-facing. Residues 57-80 (HPLSCWLSSMLMCFADAFLANFLL) form a discontinuously helical membrane-spanning segment. Over 81 to 89 (GEPVIAPFK) the chain is Lumenal. Residues 90 to 107 (RHDDIILATIIWYLVFYA) form a helical membrane-spanning segment. Residues 108–119 (PFDGIYKIAKIT) are Cytoplasmic-facing. The chain crosses the membrane as a helical span at residues 120–148 (PVKCVLAVMKEVKRAYKVSHGVSHAAKLY). A 1,2-diacyl-sn-glycero-3-phospho-(1D-myo-inositol-4,5-bisphosphate)-binding residues include K129 and R133. The Lumenal segment spans residues 149–150 (PN). The discontinuously helical transmembrane segment at 151 to 177 (SYIVQVLVGTAKGAGSGIVRTLEQLVR) threads the bilayer. S166 provides a ligand contact to a 1,2-diacyl-sn-glycero-3-phospho-(1D-myo-inositol-4,5-bisphosphate). At 178-188 (GVWLPTHNELL) the chain is on the cytoplasmic side. A helical transmembrane segment spans residues 189 to 210 (RPSFATKACVVAASVLALEKSG). Topologically, residues 211 to 215 (TYLTA) are lumenal. Residues 216 to 239 (PHDLVYLVIVGFFVYFKLSAVILH) form a helical membrane-spanning segment. The Cytoplasmic segment spans residues 240–295 (VTDPFAPIENLFCAIFMGGIWDAVSRALAASRDRRAAGAHSNENGSSISTPEKKDQ). The interval 274–295 (RAAGAHSNENGSSISTPEKKDQ) is disordered.

Belongs to the TMEM38 family. Homotrimer; trimerization probably requires binding to phosphatidylinositol 4,5-bisphosphate (PIP2).

The protein localises to the endoplasmic reticulum membrane. Potassium channel that mediates transmembrane potassium transport. Might be required for maintenance of rapid intracellular calcium release. May act as a counter-ion channel that functions in synchronization with calcium release from intracellular stores. Binds phosphatidylinositol 4,5-bisphosphate (PIP2). The protein is Trimeric intracellular cation channel type 1B.1 of Caenorhabditis elegans.